Reading from the N-terminus, the 368-residue chain is MSILEKVQPIETMLPARYYTMSTEDMEKRVREIKEKMGKMLCIPCHHYQKDEVVQFSDAIGDSLQLAQVAARNKEAKYIVFCGVHFMAETADMLTTDEQVVILPDMRAGCSMADMADIEQTERAWRELTTLFGDTMIPLTYVNSTAAIKAFCGRNGGATVTSSNAKKMVSWAFTQKERLVFLPDQHLGRNTAYDLGIELNQMAVWNPNTDSLEYSGNLEDIKVILWKGHCSVHQNFTVKNIESLRKSHPNMNIIVHPECCYEVVQASDYAGSTKYIIDTIEQAPSSSKWAIGTEMNLVNRLIQKHSDKEIISLNPFMCPCLTMNRIDLPHLLWALESIERGEQVNVIQVDKQVTKDAVLALNRMLERV.

Residues H46 and S63 each contribute to the iminosuccinate site. C110 lines the [4Fe-4S] cluster pocket. Iminosuccinate is bound by residues 141–143 and S162; that span reads YVN. C230 contributes to the [4Fe-4S] cluster binding site. Residues 256 to 258 and T273 each bind iminosuccinate; that span reads HPE. C320 provides a ligand contact to [4Fe-4S] cluster.

It belongs to the quinolinate synthase family. Type 3 subfamily. [4Fe-4S] cluster is required as a cofactor.

It localises to the cytoplasm. The enzyme catalyses iminosuccinate + dihydroxyacetone phosphate = quinolinate + phosphate + 2 H2O + H(+). It participates in cofactor biosynthesis; NAD(+) biosynthesis; quinolinate from iminoaspartate: step 1/1. In terms of biological role, catalyzes the condensation of iminoaspartate with dihydroxyacetone phosphate to form quinolinate. The polypeptide is Quinolinate synthase (Bacillus cytotoxicus (strain DSM 22905 / CIP 110041 / 391-98 / NVH 391-98)).